The chain runs to 219 residues: Cytidylate kinase (219 aa).

15–23 (GPAASGKGT) is an ATP binding site.

The protein belongs to the cytidylate kinase family. Type 1 subfamily.

The protein localises to the cytoplasm. It catalyses the reaction CMP + ATP = CDP + ADP. The enzyme catalyses dCMP + ATP = dCDP + ADP. This is Cytidylate kinase from Brucella melitensis biotype 2 (strain ATCC 23457).